A 178-amino-acid chain; its full sequence is Glutamyl-tRNA(Gln) amidotransferase subunit C, mitochondrial (178 aa).

A mitochondrion-targeting transit peptide spans 1 to 31 (MFRHIFTLGPRSISAITVRSRRALSSTAKPV). Positions 26–67 (STAKPVSAPVTSDDRPNLDVKHLKHPTKVPQQPHKSDIDRRQ) are disordered. The segment covering 37–46 (SDDRPNLDVK) has biased composition (basic and acidic residues).

This sequence belongs to the GatC family. In terms of assembly, subunit of the heterotrimeric GatCAB amidotransferase (AdT) complex, composed of A, B and C subunits.

Its subcellular location is the mitochondrion. The enzyme catalyses L-glutamyl-tRNA(Gln) + L-glutamine + ATP + H2O = L-glutaminyl-tRNA(Gln) + L-glutamate + ADP + phosphate + H(+). Functionally, allows the formation of correctly charged Gln-tRNA(Gln) through the transamidation of misacylated Glu-tRNA(Gln) in the mitochondria. The reaction takes place in the presence of glutamine and ATP through an activated gamma-phospho-Glu-tRNA(Gln). In Aedes aegypti (Yellowfever mosquito), this protein is Glutamyl-tRNA(Gln) amidotransferase subunit C, mitochondrial.